We begin with the raw amino-acid sequence, 203 residues long: Cilia- and flagella-associated protein 20 (203 aa).

The protein belongs to the CFAP20 family.

The protein resides in the nucleus. It is found in the cytoplasm. It localises to the cytoskeleton. Its subcellular location is the microtubule organizing center. The protein localises to the centrosome. The protein resides in the centriole. It is found in the cilium basal body. It localises to the cilium axoneme. In terms of biological role, cilium- and flagellum-specific protein that plays a role in axonemal structure organization and motility. Microtubule inner protein (MIP) part of the dynein-decorated doublet microtubules (DMTs) in cilia axoneme, which is required for motile cilia beating. Involved in the regulation of the size and morphology of cilia. Required for axonemal microtubules polyglutamylation. In Caenorhabditis briggsae, this protein is Cilia- and flagella-associated protein 20.